Here is a 339-residue protein sequence, read N- to C-terminus: Phenylalanine--tRNA ligase alpha subunit (339 aa).

Glutamate 254 provides a ligand contact to Mg(2+).

Belongs to the class-II aminoacyl-tRNA synthetase family. Phe-tRNA synthetase alpha subunit type 1 subfamily. In terms of assembly, tetramer of two alpha and two beta subunits. Requires Mg(2+) as cofactor.

The protein localises to the cytoplasm. The enzyme catalyses tRNA(Phe) + L-phenylalanine + ATP = L-phenylalanyl-tRNA(Phe) + AMP + diphosphate + H(+). In Lachnoclostridium phytofermentans (strain ATCC 700394 / DSM 18823 / ISDg) (Clostridium phytofermentans), this protein is Phenylalanine--tRNA ligase alpha subunit.